Here is a 258-residue protein sequence, read N- to C-terminus: Mitochondrial distribution and morphology protein 12 (258 aa).

Residues 1–233 (MSFDIHWSNL…WPSWIELDFN (233 aa)) enclose the SMP-LTD domain. The tract at residues 238 to 258 (EDLQQSKDTPTTANTGTTTTN) is disordered. Positions 246-258 (TPTTANTGTTTTN) are enriched in low complexity.

The protein belongs to the MDM12 family. Component of the ER-mitochondria encounter structure (ERMES) or MDM complex, composed of MMM1, MDM10, MDM12 and MDM34. An MMM1 homodimer associates with one molecule of MDM12 on each side in a pairwise head-to-tail manner, and the SMP-LTD domains of MMM1 and MDM12 generate a continuous hydrophobic tunnel for phospholipid trafficking.

It localises to the mitochondrion outer membrane. It is found in the endoplasmic reticulum membrane. Functionally, component of the ERMES/MDM complex, which serves as a molecular tether to connect the endoplasmic reticulum (ER) and mitochondria. Components of this complex are involved in the control of mitochondrial shape and protein biogenesis, and function in nonvesicular lipid trafficking between the ER and mitochondria. MDM12 is required for the interaction of the ER-resident membrane protein MMM1 and the outer mitochondrial membrane-resident beta-barrel protein MDM10. The MDM12-MMM1 subcomplex functions in the major beta-barrel assembly pathway that is responsible for biogenesis of all mitochondrial outer membrane beta-barrel proteins, and acts in a late step after the SAM complex. The MDM10-MDM12-MMM1 subcomplex further acts in the TOM40-specific pathway after the action of the MDM12-MMM1 complex. Essential for establishing and maintaining the structure of mitochondria and maintenance of mtDNA nucleoids. The chain is Mitochondrial distribution and morphology protein 12 from Zygosaccharomyces rouxii (strain ATCC 2623 / CBS 732 / NBRC 1130 / NCYC 568 / NRRL Y-229).